We begin with the raw amino-acid sequence, 536 residues long: Prickle planar cell polarity protein 3-B (536 aa).

The PET domain occupies 66-175; sequence SGSQRDSLCD…CVRPISGTMS (110 aa). LIM zinc-binding domains are found at residues 177–241, 242–302, and 305–366; these read TVCQ…ELKR, PRCL…LYAQ, and DSCG…HTKS. Residues 418-536 are disordered; that stretch reads PTQAAPARSL…KKKDKSCFLS (119 aa). Residues 438–448 are compositionally biased toward basic and acidic residues; that stretch reads FSRECPNRRSL. A compositionally biased stretch (polar residues) spans 450–467; it reads DLSSHTRTPTRVTFQLPS. Over residues 474-487 the composition is skewed to low complexity; that stretch reads SISFSRPSFTSSSS.

It belongs to the prickle / espinas / testin family. In terms of assembly, interacts with vangl2 via its C-terminus. The vangl2-dependent membrane recruitment of prickle3 is a prerequisite for its polarization. Interacts with wtip. Wtip is involved in the recruitment of prickle3 to the basal body.

The protein resides in the cytoplasm. Its subcellular location is the cell membrane. It is found in the mitochondrion. Involved in the planar cell polarity (PCP) pathway that is essential for the polarization of epithelial cells during morphogenetic processes, including gastrulation and neurulation. PCP is maintained by two molecular modules, the global and the core modules. Proteins of the core module include the proteins Frizzled (Fz), Disheveled (Dsh), Van Gogh (Vang), Prickle (Pk), Flamingo (Fmi, Celsr) and Diego (Dgo). The core module proteins develop subcellular asymmetry, accumulating in two groups on opposite sides of epithelial cells. Distinct proximal (Vang, Pk and Fmi) and distal (Fz, Dsh, Dgo and Fmi) complexes segregate to opposite sides of the cell, where they interact with the opposite complex in the neighboring cell at or near the adherents junctions. Directional information to orient polarization with respect to the tissue axes is provided by the global module which involves Wnt proteins. Involved in the organization of the basal body. Involved in cilia growth and positioning. Required for proper assembly, stability, and function of mitochondrial membrane ATP synthase (mitochondrial complex V). This is Prickle planar cell polarity protein 3-B (prickle3-b) from Xenopus laevis (African clawed frog).